The sequence spans 293 residues: Bisanhydrobacterioruberin hydratase (293 aa).

A run of 7 helical transmembrane segments spans residues 36–56 (IAVVFPLVGAVTLLASAEGLL), 66–86 (FVLFGTFVMRLPLVAGIFPLV), 89–109 (RAGLALVALTLYSYGIELVGV), 134–154 (FGLPVFFFPLVLNAYLLVLLL), 171–191 (ATVMLVDLVLDPGAVAIGFWI), 199–219 (GVPWQNYAGWLLSGSVAVLLF), and 254–274 (LFYTNWVPFGLAALLGAGLLW).

This sequence belongs to the BABR hydratase family.

The protein resides in the membrane. It carries out the reaction bacterioruberin = bisanhydrobacterioruberin + 2 H2O. Its pathway is carotenoid biosynthesis. In terms of biological role, involved in the biosynthesis of the acyclic C50 carotenoid bacterioruberin (BR). Catalyzes the reaction that introduces hydroxyl groups to C3'' and C3''' of bisanhydrobacterioruberin (BABR) to generate BR. This is Bisanhydrobacterioruberin hydratase from Haloarcula japonica (strain ATCC 49778 / DSM 6131 / JCM 7785 / NBRC 101032 / NCIMB 13157 / TR-1).